Here is a 79-residue protein sequence, read N- to C-terminus: Quinohemoprotein amine dehydrogenase subunit gamma (79 aa).

Residues 7–16 (CTATTDPGWE) constitute a cross-link (4-cysteinyl-glutamic acid (Cys-Glu)). Cross-links (3-cysteinyl-aspartic acid (Cys-Asp)) lie at residues 27–33 (CQPMEAD) and 41–49 (CWWPAQVPD). The active-site Proton acceptor is the D33. The 4'-cysteinyl-tryptophylquinone (Cys-Trp) cross-link spans 37–43 (CSDPCWW). At W43 the chain carries Tryptophylquinone.

This sequence belongs to the quinohemoprotein amine dehydrogenase subunit gamma family. In terms of assembly, heterotrimer of an alpha, a beta and a gamma subunit. It depends on cysteine tryptophylquinone residue as a cofactor. In terms of processing, the cysteine tryptophylquinone (CTQ) is generated by oxidation of the indole ring of a tryptophan residue to form tryptophylquinone, followed by covalent cross-linking with a cysteine residue.

The protein localises to the periplasm. It carries out the reaction an aliphatic amine + A + H2O = an aldehyde + AH2 + NH4(+). Its function is as follows. Catalyzes the oxidative deamination of a wide range of aliphatic monoamines and diamines. The physiological electron acceptor is an azurin-like blue protein. This is Quinohemoprotein amine dehydrogenase subunit gamma (qhnDH) from Pseudomonas putida (strain ATCC 47054 / DSM 6125 / CFBP 8728 / NCIMB 11950 / KT2440).